Here is a 447-residue protein sequence, read N- to C-terminus: 1-aminocyclopropane-1-carboxylate synthase 7 (447 aa).

Glu-61 and Tyr-100 together coordinate substrate. An N6-(pyridoxal phosphate)lysine modification is found at Lys-285.

It belongs to the class-I pyridoxal-phosphate-dependent aminotransferase family. In terms of assembly, homodimer and heterodimer. In vivo, the relevance of heterodimerization with other ACS enzymes is however unsure. Interacts with XBAT32. Pyridoxal 5'-phosphate is required as a cofactor. Post-translationally, ubiquitinated by XBAT32. Ubiquitination probably leads to its subsequent degradation, thus controlling ethylene production. In terms of tissue distribution, expressed in roots.

It carries out the reaction S-adenosyl-L-methionine = 1-aminocyclopropane-1-carboxylate + S-methyl-5'-thioadenosine + H(+). Its pathway is alkene biosynthesis; ethylene biosynthesis via S-adenosyl-L-methionine; ethylene from S-adenosyl-L-methionine: step 1/2. In terms of biological role, 1-aminocyclopropane-1-carboxylate synthase (ACS) enzymes catalyze the conversion of S-adenosyl-L-methionine (SAM) into 1-aminocyclopropane-1-carboxylate (ACC), a direct precursor of ethylene. In Arabidopsis thaliana (Mouse-ear cress), this protein is 1-aminocyclopropane-1-carboxylate synthase 7 (ACS7).